Consider the following 469-residue polypeptide: Cytosolic beta-glucosidase (469 aa).

Substrate contacts are provided by Q17, H120, and N164. E165 (proton donor) is an active-site residue. Residue Y309 coordinates substrate. E373 serves as the catalytic Nucleophile. Substrate contacts are provided by residues W417 and E424–W425.

This sequence belongs to the glycosyl hydrolase 1 family. Klotho subfamily. In terms of processing, the N-terminus is blocked. As to expression, present in hepatocytes (at protein level).

The protein resides in the cytoplasm. It localises to the cytosol. The enzyme catalyses Hydrolysis of terminal, non-reducing beta-D-glucosyl residues with release of beta-D-glucose.. It carries out the reaction a beta-D-glucosyl-(1&lt;-&gt;1')-N-acylsphing-4-enine + H2O = an N-acylsphing-4-enine + D-glucose. The catalysed reaction is a beta-D-galactosyl-(1&lt;-&gt;1')-N-acylsphing-4-enine + H2O = an N-acylsphing-4-enine + D-galactose. It catalyses the reaction beta-D-glucosyl-(1&lt;-&gt;1)-sphing-4-enine + H2O = sphing-4-enine + D-glucose. The enzyme catalyses beta-D-glucosyl-(1&lt;-&gt;1)-N-octadecanoylsphing-4-enine + H2O = N-octadecanoylsphing-4-enine + D-glucose. It carries out the reaction beta-D-galactosyl-(1&lt;-&gt;1)-sphing-4-enine + H2O = sphing-4-enine + D-galactose. The catalysed reaction is beta-D-galactosyl-(1&lt;-&gt;1')-N-octadecanoylsphing-4-enine + H2O = N-octadecanoylsphing-4-enine + D-galactose. It catalyses the reaction a beta-D-xylosyl-(1&lt;-&gt;1')-N-acylsphing-4-enine + cholesterol = cholesteryl 3-beta-D-xyloside + an N-acylsphing-4-enine. Its activity is regulated as follows. Inhibited by 2,4-dinitrophenyl-2-fluoro-2-deoxy-beta-D-glucopyranoside. Neutral cytosolic beta-glycosidase with a broad substrate specificity that could play a role in the catabolism of glycosylceramides. Has a significant glucosylceramidase activity in vitro. However, that activity is relatively low and its significance in vivo is not clear. Hydrolyzes galactosylceramide/GalCer, glucosylsphingosine/GlcSph and galactosylsphingosine/GalSph. However, the in vivo relevance of these activities is unclear. It can also hydrolyze a broad variety of dietary glycosides including phytoestrogens, flavonols, flavones, flavanones and cyanogens in vitro and could therefore play a role in the metabolism of xenobiotics. Possesses transxylosylase activity in vitro using xylosylated ceramides/XylCers (such as beta-D-xylosyl-(1&lt;-&gt;1')-N-acylsphing-4-enine) as xylosyl donors and cholesterol as acceptor. Could also play a role in the catabolism of cytosolic sialyl free N-glycans. The chain is Cytosolic beta-glucosidase from Cavia porcellus (Guinea pig).